The following is an 89-amino-acid chain: Large ribosomal subunit protein eL34 (89 aa).

Positions 41–69 (RPLNGVPRGRPSELRKLPKTAKRPERPYP) are disordered. Basic and acidic residues predominate over residues 50–66 (RPSELRKLPKTAKRPER).

It belongs to the eukaryotic ribosomal protein eL34 family.

The polypeptide is Large ribosomal subunit protein eL34 (Thermococcus gammatolerans (strain DSM 15229 / JCM 11827 / EJ3)).